The following is a 236-amino-acid chain: Urease accessory protein UreG 2 (236 aa).

Residues Met1–Gly40 form a disordered region. A GTP-binding site is contributed by Gly43 to Thr50.

It belongs to the SIMIBI class G3E GTPase family. UreG subfamily. Homodimer. UreD, UreF and UreG form a complex that acts as a GTP-hydrolysis-dependent molecular chaperone, activating the urease apoprotein by helping to assemble the nickel containing metallocenter of UreC. The UreE protein probably delivers the nickel.

It is found in the cytoplasm. Functionally, facilitates the functional incorporation of the urease nickel metallocenter. This process requires GTP hydrolysis, probably effectuated by UreG. This is Urease accessory protein UreG 2 from Saccharopolyspora erythraea (strain ATCC 11635 / DSM 40517 / JCM 4748 / NBRC 13426 / NCIMB 8594 / NRRL 2338).